Reading from the N-terminus, the 414-residue chain is Esterase FrsA (414 aa).

It belongs to the FrsA family.

It carries out the reaction a carboxylic ester + H2O = an alcohol + a carboxylate + H(+). Functionally, catalyzes the hydrolysis of esters. This chain is Esterase FrsA, found in Salmonella agona (strain SL483).